The following is a 214-amino-acid chain: Large ribosomal subunit protein bL25 (214 aa).

Residues 193-214 (PRAAAEEEDTGAEGDVEAADAE) are disordered. Acidic residues predominate over residues 198–214 (EEEDTGAEGDVEAADAE).

Belongs to the bacterial ribosomal protein bL25 family. CTC subfamily. Part of the 50S ribosomal subunit; part of the 5S rRNA/L5/L18/L25 subcomplex. Contacts the 5S rRNA. Binds to the 5S rRNA independently of L5 and L18.

Its function is as follows. This is one of the proteins that binds to the 5S RNA in the ribosome where it forms part of the central protuberance. The sequence is that of Large ribosomal subunit protein bL25 from Nitrosococcus oceani (strain ATCC 19707 / BCRC 17464 / JCM 30415 / NCIMB 11848 / C-107).